The sequence spans 309 residues: Mannitol-1-phosphatase (309 aa).

The active-site Tele-phosphohistidine intermediate is histidine 82. Glutamate 166 (proton donor/acceptor) is an active-site residue.

Belongs to the phosphoglycerate mutase family.

It catalyses the reaction D-mannitol 1-phosphate + H2O = D-mannitol + phosphate. Its activity is regulated as follows. By diethyl pyrocarbonate (DEPC). In terms of biological role, key enzyme for mannitol biosynthesis. The polypeptide is Mannitol-1-phosphatase (Eimeria tenella (Coccidian parasite)).